The sequence spans 205 residues: Transcriptional regulator GfcR (205 aa).

This sequence belongs to the purine/pyrimidine phosphoribosyltransferase family. GfcR subfamily.

The polypeptide is Transcriptional regulator GfcR (Methanococcus maripaludis (strain C5 / ATCC BAA-1333)).